We begin with the raw amino-acid sequence, 264 residues long: 4-oxalocrotonate decarboxylase (264 aa).

It belongs to the hydratase/decarboxylase family.

It carries out the reaction (3E)-2-oxohex-3-enedioate + H(+) = 2-oxopent-4-enoate + CO2. It functions in the pathway xenobiotic degradation; toluene degradation. The chain is 4-oxalocrotonate decarboxylase (xylI) from Pseudomonas putida (Arthrobacter siderocapsulatus).